The following is an 81-amino-acid chain: Acyl carrier protein (81 aa).

Residues 2-77 (ASVEEKVKQI…DAVDYITAHA (76 aa)) enclose the Carrier domain. Serine 37 carries the post-translational modification O-(pantetheine 4'-phosphoryl)serine.

This sequence belongs to the acyl carrier protein (ACP) family. 4'-phosphopantetheine is transferred from CoA to a specific serine of apo-ACP by AcpS. This modification is essential for activity because fatty acids are bound in thioester linkage to the sulfhydryl of the prosthetic group.

It localises to the cytoplasm. The protein operates within lipid metabolism; fatty acid biosynthesis. Functionally, carrier of the growing fatty acid chain in fatty acid biosynthesis. The chain is Acyl carrier protein from Koribacter versatilis (strain Ellin345).